Reading from the N-terminus, the 321-residue chain is Tyrosine recombinase XerC (321 aa).

The region spanning 16–107 (SDIGQQIVRW…GLRSFARFLE (92 aa)) is the Core-binding (CB) domain. The Tyr recombinase domain occupies 128–315 (SVPKPIHMSA…DSERLLDVYR (188 aa)). Residues Arg-173, Lys-199, His-267, Arg-270, and His-293 contribute to the active site. Tyr-302 (O-(3'-phospho-DNA)-tyrosine intermediate) is an active-site residue.

It belongs to the 'phage' integrase family. XerC subfamily. Forms a cyclic heterotetrameric complex composed of two molecules of XerC and two molecules of XerD.

It is found in the cytoplasm. Functionally, site-specific tyrosine recombinase, which acts by catalyzing the cutting and rejoining of the recombining DNA molecules. The XerC-XerD complex is essential to convert dimers of the bacterial chromosome into monomers to permit their segregation at cell division. It also contributes to the segregational stability of plasmids. This Nitrobacter winogradskyi (strain ATCC 25391 / DSM 10237 / CIP 104748 / NCIMB 11846 / Nb-255) protein is Tyrosine recombinase XerC.